The chain runs to 268 residues: uncharacterized protein (268 aa).

Helical transmembrane passes span 169-189 (AIIYVFMCLFFSLFWFYQGFA), 190-210 (GVKTSILTGTAEIGLAILWLL), and 225-245 (IFAGFACLGSEIFMWVLLSVF).

It localises to the cell membrane. This is an uncharacterized protein from Bacillus subtilis (strain 168).